A 303-amino-acid chain; its full sequence is Phosphoglycerate mutase 3 (303 aa).

Residues 13–20, 26–27, arginine 70, 120–123, lysine 131, and 147–148 each bind substrate; these read RHGQSELN, CG, ERHY, and RR. Residue histidine 14 is the Tele-phosphohistidine intermediate of the active site. Residue glutamate 120 is the Proton donor/acceptor of the active site. The segment at 168–198 is disordered; it reads NDQGSSTGYDFKEPNRHLKYGPEEKANERLP. A compositionally biased stretch (basic and acidic residues) spans 177–198; it reads DFKEPNRHLKYGPEEKANERLP. 236-237 lines the substrate pocket; the sequence is GS.

It belongs to the phosphoglycerate mutase family. BPG-dependent PGAM subfamily.

It catalyses the reaction (2R)-2-phosphoglycerate = (2R)-3-phosphoglycerate. The protein operates within carbohydrate degradation; glycolysis; pyruvate from D-glyceraldehyde 3-phosphate: step 3/5. In terms of biological role, could be non-functional. The sequence is that of Phosphoglycerate mutase 3 (GPM3) from Saccharomyces cerevisiae (strain ATCC 204508 / S288c) (Baker's yeast).